A 200-amino-acid chain; its full sequence is Oligoribonuclease (200 aa).

The region spanning 5–169 (MVWIDCEMTG…ADIRESIAEL (165 aa)) is the Exonuclease domain. Y126 is an active-site residue.

It belongs to the oligoribonuclease family.

Its subcellular location is the cytoplasm. 3'-to-5' exoribonuclease specific for small oligoribonucleotides. This is Oligoribonuclease from Streptomyces coelicolor (strain ATCC BAA-471 / A3(2) / M145).